The primary structure comprises 1004 residues: NACHT, LRR and PYD domains-containing protein 9C (1004 aa).

The 92-residue stretch at 1-92 (MVDSSSYGLL…TMAQIERRDK (92 aa)) folds into the Pyrin domain. The region spanning 143–465 (ATAVVLGTRG…KQDKDTYHPV (323 aa)) is the NACHT domain. Position 149-156 (149-156 (GTRGKGKT)) interacts with ATP. LRR repeat units follow at residues 750–770 (KVKH…MFLC), 779–800 (VLES…HLYE), 807–828 (HLSL…LLCE), 836–857 (TLKE…EISA), and 864–884 (NLKT…KRLC).

Belongs to the NLRP family. Oocyte specific.

It is found in the cytoplasm. Its function is as follows. May be involved in inflammation. This chain is NACHT, LRR and PYD domains-containing protein 9C (Nlrp9c), found in Mus musculus (Mouse).